A 96-amino-acid chain; its full sequence is Plasminogen-like protein A (96 aa).

An N-terminal signal peptide occupies residues 1–19 (MEHKEVVLLLLLFLKSGQG). Positions 20–96 (EPLDDYVNAQ…RMRDVVLFEK (77 aa)) constitute a PAN domain. 2 disulfide bridges follow: cysteine 49-cysteine 73 and cysteine 53-cysteine 61.

Expressed in liver.

It is found in the secreted. Functionally, may bind non-covalently to lysine binding sites present in the kringle structures of plasminogen. This may interfere with the binding of fibrin or alpha-2-antiplasmin to plasminogen and may result in the localization of activity at sites necessary for extracellular matrix destruction. The polypeptide is Plasminogen-like protein A (PLGLA) (Homo sapiens (Human)).